The following is a 187-amino-acid chain: DNA-directed RNA polymerase subunit Rpo7 (187 aa).

In terms of domain architecture, S1 motif spans 82-166; it reads YELIEGEVVD…RGSKIALTMR (85 aa).

This sequence belongs to the eukaryotic RPB7/RPC8 RNA polymerase subunit family. Part of the RNA polymerase complex. Forms a stalk with Rpo4 that extends from the main structure.

Its subcellular location is the cytoplasm. The catalysed reaction is RNA(n) + a ribonucleoside 5'-triphosphate = RNA(n+1) + diphosphate. Its function is as follows. DNA-dependent RNA polymerase (RNAP) catalyzes the transcription of DNA into RNA using the four ribonucleoside triphosphates as substrates. This Methanocaldococcus jannaschii (strain ATCC 43067 / DSM 2661 / JAL-1 / JCM 10045 / NBRC 100440) (Methanococcus jannaschii) protein is DNA-directed RNA polymerase subunit Rpo7.